The primary structure comprises 301 residues: ATP synthase gamma chain (301 aa).

This sequence belongs to the ATPase gamma chain family. As to quaternary structure, F-type ATPases have 2 components, CF(1) - the catalytic core - and CF(0) - the membrane proton channel. CF(1) has five subunits: alpha(3), beta(3), gamma(1), delta(1), epsilon(1). CF(0) has three main subunits: a, b and c.

The protein localises to the cell inner membrane. Functionally, produces ATP from ADP in the presence of a proton gradient across the membrane. The gamma chain is believed to be important in regulating ATPase activity and the flow of protons through the CF(0) complex. This Helicobacter acinonychis (strain Sheeba) protein is ATP synthase gamma chain.